The following is a 343-amino-acid chain: Ribosomal RNA-processing protein 8 (343 aa).

A disordered region spans residues 1–123 (MGKKRKITDE…NDDVAAAPEE (123 aa)). The segment covering 7 to 33 (ITDEKDAQHVPAEKREKVENWLKKSTE) has biased composition (basic and acidic residues). 2 stretches are compositionally biased toward basic residues: residues 45-59 (KKKR…KLAA) and 89-101 (KKKR…KKKF). Acidic residues predominate over residues 112–123 (TENDDVAAAPEE). S-adenosyl-L-methionine contacts are provided by His-169, Gly-204, Asp-224, Asp-236, Met-237, and Cys-253.

It belongs to the methyltransferase superfamily. RRP8 family.

Its subcellular location is the nucleus. It localises to the nucleolus. In terms of biological role, probable methyltransferase required to silence rDNA. Involved in regulation of antisense ribosomal siRNA production. Required for the N1-methyladenosine modification of 26S rRNAs. The protein is Ribosomal RNA-processing protein 8 (rrp-8) of Caenorhabditis elegans.